Consider the following 324-residue polypeptide: Probable UDP-sugar transporter protein SLC35A4 (324 aa).

Residues 1–18 (MSVEDGGVPGLGRPRKAR) are Cytoplasmic-facing. Residues 19-39 (WTLMLLLSTAMYGAHAPLLAL) traverse the membrane as a helical segment. Over 40–52 (CHVDGRVPFRPSS) the chain is Lumenal. Residues 53 to 73 (AVLLTELTKLLLCALSLLVGW) traverse the membrane as a helical segment. Residues 74–85 (QAWPQGTPPWRQ) lie on the Cytoplasmic side of the membrane. Residues 86 to 106 (AAPFALSALLYGANNNLVIYL) traverse the membrane as a helical segment. The Lumenal portion of the chain corresponds to 107 to 141 (QRYMDPSTYQVLSNLKIGSTALFYCLCLRHRLSAR). The chain crosses the membrane as a helical span at residues 142-162 (QGLALLLLMAAGACYAAGGLQ). The Cytoplasmic segment spans residues 163 to 180 (DPGTTLPGPPSAAATSPM). Residues 181–201 (PLHITPLGLLLLILYCLISGL) form a helical membrane-spanning segment. Residues 202 to 214 (SSVYTELLMKRQR) lie on the Lumenal side of the membrane. The chain crosses the membrane as a helical span at residues 215–235 (LPLALQNLFLYSFGVLLNLGL). Over 236–248 (HAGGGPGPGLLEG) the chain is Cytoplasmic. Residues 249–271 (FSGWMALVVLSQALNGLLMSAVM) form a helical membrane-spanning segment. Residues 272–275 (KHGS) are Lumenal-facing. A helical membrane pass occupies residues 276–298 (SITRLFVVSCSLVVNAVLSAALL). Over 299–324 (RLQLTAAFFLATLLIGLAVRLYYGSR) the chain is Cytoplasmic.

This sequence belongs to the nucleotide-sugar transporter family. SLC35A subfamily. As to quaternary structure, found in a complex with SLC35A2 and SLC35A3.

It localises to the golgi apparatus membrane. The enzyme catalyses CDP-L-ribitol(in) + CDP(out) = CDP-L-ribitol(out) + CDP(in). Mediates the transport of CDP-ribitol. Does not exhibit CMP-sialic acid, UDP-galactose and UDP-N-acetylglucosamine transport activity. This chain is Probable UDP-sugar transporter protein SLC35A4, found in Bos taurus (Bovine).